We begin with the raw amino-acid sequence, 537 residues long: CTP synthase (537 aa).

Positions 1-268 are amidoligase domain; the sequence is MGETKYIFVT…DSTILEKMGL (268 aa). A CTP-binding site is contributed by Ser-15. UTP is bound at residue Ser-15. Residue 16–21 coordinates ATP; that stretch reads SLGKGI. L-glutamine is bound at residue Tyr-56. Residue Asp-73 coordinates ATP. Mg(2+)-binding residues include Asp-73 and Glu-143. CTP-binding positions include 150–152, 189–194, and Lys-225; these read DIE and KTKPTQ. Residues 189–194 and Lys-225 contribute to the UTP site; that span reads KTKPTQ. The region spanning 296 to 537 is the Glutamine amidotransferase type-1 domain; it reads NIALVGKYDL…VKAAIENEKN (242 aa). Gly-357 provides a ligand contact to L-glutamine. Residue Cys-384 is the Nucleophile; for glutamine hydrolysis of the active site. L-glutamine contacts are provided by residues 385 to 388, Glu-408, and Arg-465; that span reads LGMQ. Residues His-510 and Glu-512 contribute to the active site.

It belongs to the CTP synthase family. In terms of assembly, homotetramer.

It catalyses the reaction UTP + L-glutamine + ATP + H2O = CTP + L-glutamate + ADP + phosphate + 2 H(+). It carries out the reaction L-glutamine + H2O = L-glutamate + NH4(+). The catalysed reaction is UTP + NH4(+) + ATP = CTP + ADP + phosphate + 2 H(+). The protein operates within pyrimidine metabolism; CTP biosynthesis via de novo pathway; CTP from UDP: step 2/2. Its activity is regulated as follows. Allosterically activated by GTP, when glutamine is the substrate; GTP has no effect on the reaction when ammonia is the substrate. The allosteric effector GTP functions by stabilizing the protein conformation that binds the tetrahedral intermediate(s) formed during glutamine hydrolysis. Inhibited by the product CTP, via allosteric rather than competitive inhibition. Functionally, catalyzes the ATP-dependent amination of UTP to CTP with either L-glutamine or ammonia as the source of nitrogen. Regulates intracellular CTP levels through interactions with the four ribonucleotide triphosphates. In Bacteroides thetaiotaomicron (strain ATCC 29148 / DSM 2079 / JCM 5827 / CCUG 10774 / NCTC 10582 / VPI-5482 / E50), this protein is CTP synthase.